The primary structure comprises 311 residues: Progestin and adipoQ receptor family member 3 (311 aa).

A required for interaction with SREBF2 region spans residues 1-20 (MHQKLLKSAHYIELGSYQYW). The Cytoplasmic segment spans residues 1-70 (MHQKLLKSAH…KSLFILSNET (70 aa)). The interval 41–60 (KDNPYITDGYRAYLPSRLCI) is required for interaction with SCAP. A golgi targeting region spans residues 61–71 (KSLFILSNETV). A helical transmembrane segment spans residues 71 to 91 (VNIWSHLLGFFLFFTLGIYDM). Over 92–104 (TSVLPSASASRED) the chain is Lumenal. Residues 105–125 (FVICSICLFCFQVCMLCSVGY) traverse the membrane as a helical segment. Residues 126-145 (HLFSCHRSEKTCRRWMALDY) lie on the Cytoplasmic side of the membrane. Residues 146 to 166 (AGISIGILGCYVSGVFYAFYC) form a helical membrane-spanning segment. Residues 167-172 (NNYWRQ) are Lumenal-facing. The helical transmembrane segment at 173-193 (VYLITVLAMILAVFFAQIHPS) threads the bilayer. Residues 194 to 203 (YLTQQWQRLR) lie on the Cytoplasmic side of the membrane. A helical membrane pass occupies residues 204 to 224 (PIIFCSVSGYGVIPTLHWVWL). Residues 225–235 (NGGVSAPIVQD) lie on the Lumenal side of the membrane. A helical membrane pass occupies residues 236-256 (FAPRVIVMYVIALLAFLFYIS). Residues 257 to 275 (KVPERYFPGQLNYLGSSHQ) are Cytoplasmic-facing. The chain crosses the membrane as a helical span at residues 276–296 (IWHVLAVVMLYWWHQSTVYVM). Residues 297 to 311 (QYRHSKPCPDYVSHL) are Lumenal-facing. The interval 299–303 (RHSKP) is golgi targeting.

This sequence belongs to the ADIPOR family. As to quaternary structure, interacts with SCAP and SREBF2; the interactions are direct, increase in low cholesterol conditions and tether SCAP:SREBP complex to the Golgi apparatus. Interaction with SCAP is mutually exclusive with INSIG1. In hepatocytes, interacts with PPARA and HUWE1; the interactions promote PPARA poylubiquitination and HUWE1-mediated degradation. In macrophages, interacts with PPARG and STUB1; the interactions promote PPARG poylubiquitination and STUB1-mediated degradation.

The protein localises to the golgi apparatus membrane. Its function is as follows. Golgi-anchored protein which modulates its interactors acitivies by tethering them to the Golgi apparatus. Functions as a spatial regulator of RAF1 kinase by sequestrating it to the Golgi apparatus. Acts as a positive regulator of cholesterol biosynthesis by mediating the anchoring of the SCAP:SREBP complex in the Golgi apparatus, thereby promoting SCAP:SREBF2 complex formation, potentiating SREBF2 and SREBF1 processing and enhancing lipid synthesis. Also regulates PPARA and PPARG functions by mediating their interaction with E3 ubiquitin ligases, such as STUB1 or HUWE1, leading to their polyubiquitination and proteasome-mediated degradation. This Mus musculus (Mouse) protein is Progestin and adipoQ receptor family member 3.